A 360-amino-acid chain; its full sequence is Serine/threonine-protein kinase SRK2H (360 aa).

Residues 4–260 (YEVVKDLGAG…LKEIKKHPWY (257 aa)) form the Protein kinase domain. Residues 10-18 (LGAGNFGVA) and lysine 33 contribute to the ATP site. Aspartate 123 functions as the Proton acceptor in the catalytic mechanism. Residues 298-360 (EARNPAPSSN…AHSCQEPPKA (63 aa)) are disordered. Acidic residues predominate over residues 313 to 343 (DDDEEDVEDEVEEEEEEEEEEEEEEEEEEDE). Residues 344-360 (YEKHVKEAHSCQEPPKA) show a composition bias toward basic and acidic residues.

The protein belongs to the protein kinase superfamily. Ser/Thr protein kinase family. As to expression, expressed in seedlings.

It catalyses the reaction L-seryl-[protein] + ATP = O-phospho-L-seryl-[protein] + ADP + H(+). The catalysed reaction is L-threonyl-[protein] + ATP = O-phospho-L-threonyl-[protein] + ADP + H(+). The sequence is that of Serine/threonine-protein kinase SRK2H (SRK2H) from Arabidopsis thaliana (Mouse-ear cress).